Reading from the N-terminus, the 169-residue chain is uncharacterized protein (169 aa).

3 helical membrane passes run Ala-25–Phe-45, Phe-57–Phe-77, and Leu-91–Val-111.

Belongs to the major facilitator superfamily. Allantoate permease family.

The protein localises to the membrane. This is an uncharacterized protein from Saccharomyces cerevisiae (strain ATCC 204508 / S288c) (Baker's yeast).